The primary structure comprises 289 residues: Extracellular ribonuclease (289 aa).

The signal sequence occupies residues 1–24; the sequence is MTKKLWFLPIVCLFFILGWTAPSA. Positions 25-51 are excised as a propeptide; it reads SAGAPADTNLYSRLAVSTAGGTTLFPQ. Residues 177–197 form a disordered region; that stretch reads FDNGGSEYPKAPGNYYDGDSW.

The protein resides in the secreted. Its function is as follows. Mg(2+)-activated ribonuclease which hydrolyzes RNA apparently nonspecifically into oligonucleotides with 5'-terminal phosphate. The chain is Extracellular ribonuclease (bsn) from Bacillus amyloliquefaciens (Bacillus velezensis).